The following is a 464-amino-acid chain: Neuronal acetylcholine receptor subunit beta-3 (464 aa).

The signal sequence occupies residues 1–30 (MTGFLRVFLVLSATLSGSWVTLTATAGLSS). At 31–238 (VAEHEDALLR…VTYSFVLRRL (208 aa)) the chain is on the extracellular side. N55 and N172 each carry an N-linked (GlcNAc...) asparagine glycan. C159 and C173 are disulfide-bonded. Helical transmembrane passes span 239–263 (PLFYTLFLIIPCLGLSFLTVLVFYL), 271–288 (LSLSTSVLVSLTVFLLVI), and 305–326 (YLLFIMIFVTLSIIVTVFVINV). The Cytoplasmic portion of the chain corresponds to 327–434 (HHRSSSTYHP…WKFVAQVLDR (108 aa)). Residues 435-453 (IFLWLFLIASVLGSILIFI) form a helical membrane-spanning segment.

It belongs to the ligand-gated ion channel (TC 1.A.9) family. Acetylcholine receptor (TC 1.A.9.1) subfamily. Beta-3/CHRNB3 sub-subfamily. In terms of assembly, neuronal AChR seems to be composed of two different type of subunits: alpha and beta. CHRNB3/beta-3 subunit is only able to form functional nAChRs when co-assembled with another beta subunit. Participates in pentameric assemblies along with CHRNA4/alpha-4 and CHRNB2/beta-2 subunits and with CHRNA6/alpha-6 as well, forming stoichiometries such as (CHRNA3:CHRNB4)2:CHRNB3, (CHRNA4:CHRNB2)2:CHRNB3 or (CHRNA6:CHRNB2)2:CHRNB3.

The protein resides in the synaptic cell membrane. Its subcellular location is the cell membrane. The enzyme catalyses Ca(2+)(in) = Ca(2+)(out). It carries out the reaction K(+)(in) = K(+)(out). It catalyses the reaction Na(+)(in) = Na(+)(out). With respect to regulation, activated by a myriad of ligands such as acetylcholine, cytisine, nicotine, choline and epibatidine. In terms of biological role, component of neuronal acetylcholine receptors (nAChRs) that function as pentameric, ligand-gated cation channels with high calcium permeability among other activities. nAChRs are excitatory neurotrasnmitter receptors formed by a collection of nAChR subunits known to mediate synaptic transmission in the nervous system and the neuromuscular junction. Each nAchR subunit confers differential attributes to channel properties, including activation, deactivation and desensitization kinetics, pH sensitivity, cation permeability, and binding to allosteric modulators. Has an accessory rather than functional role and is only able to form functional nAChRs when co-assembled with another beta subunit. Participates in pentameric assemblies along with CHRNA3, CHRNA4, CHRNA6, CHRNB2 and CHRNB4. Modulates receptor assembly and increases receptor sensitivity to nicotine when associated with CHRNB2, CHRNA4 and/or CHRNA6 as well as CHRNA3 and CHRNB4. Seems to play a role in nicotine addiction. The sequence is that of Neuronal acetylcholine receptor subunit beta-3 (Chrnb3) from Rattus norvegicus (Rat).